The sequence spans 425 residues: Histidine--tRNA ligase (425 aa).

The protein belongs to the class-II aminoacyl-tRNA synthetase family. In terms of assembly, homodimer.

The protein localises to the cytoplasm. It catalyses the reaction tRNA(His) + L-histidine + ATP = L-histidyl-tRNA(His) + AMP + diphosphate + H(+). In Histophilus somni (strain 2336) (Haemophilus somnus), this protein is Histidine--tRNA ligase.